The sequence spans 489 residues: Glucose-6-phosphate 1-dehydrogenase (489 aa).

NADP(+)-binding residues include Arg-50 and Lys-151. Residues His-181, Lys-185, Glu-219, and Asp-238 each contribute to the substrate site. Catalysis depends on His-243, which acts as the Proton acceptor. 2 residues coordinate substrate: Lys-341 and Lys-346.

This sequence belongs to the glucose-6-phosphate dehydrogenase family. In terms of assembly, homodimer.

The catalysed reaction is D-glucose 6-phosphate + NADP(+) = 6-phospho-D-glucono-1,5-lactone + NADPH + H(+). The protein operates within carbohydrate degradation; pentose phosphate pathway; D-ribulose 5-phosphate from D-glucose 6-phosphate (oxidative stage): step 1/3. Its function is as follows. Catalyzes the oxidation of glucose 6-phosphate to 6-phosphogluconolactone. The chain is Glucose-6-phosphate 1-dehydrogenase from Gluconobacter oxydans (strain 621H) (Gluconobacter suboxydans).